Reading from the N-terminus, the 302-residue chain is Pentatricopeptide repeat-containing protein At4g38150 (302 aa).

Residues 26–40 show a composition bias toward polar residues; sequence SATRFLSTGDNGQVD. 2 disordered regions span residues 26-82 and 94-116; these read SATR…TTLS and VNQDSRETPKPEQYPQEPLPPPE. Over residues 54–67 the composition is skewed to basic and acidic residues; it reads LRGERSSNSHREPP. PPR repeat units lie at residues 130–164, 165–199, 200–234, and 235–269; these read LIPNAVAMLDGLCKDGLVQEAMKLFGLMRDKGTIP, EVVIYTAVVEAFCKAHKIEDAKRIFRKMQNNGIAP, NAFSYGVLVQGLYNCNMLDDAVAFCSEMLESGHSP, and NVPTFVELVDALCRVKGVEQAQSAIDTLNQKGFAV.

It belongs to the PPR family. P subfamily.

The polypeptide is Pentatricopeptide repeat-containing protein At4g38150 (Arabidopsis thaliana (Mouse-ear cress)).